A 446-amino-acid polypeptide reads, in one-letter code: CBL-interacting protein kinase 8 (446 aa).

The region spanning 13–266 is the Protein kinase domain; sequence YEVGRTIGEG…IEEIRNDEWF (254 aa). Residues 19 to 27 and lysine 42 each bind ATP; that span reads IGEGTFAKV. Residue aspartate 136 is the Proton acceptor of the active site. The tract at residues 154 to 181 is activation loop; that stretch reads DFGLSAWPAQGGALLRTTCGTPNYVAPE. In terms of domain architecture, NAF spans 301-329; sequence LDDEAGPLTLNAFDLIILSQGLNLAALFD. The PPI stretch occupies residues 336 to 365; the sequence is KLQNRFLSRKPAKVIMSSMEVVAQSMGYKT.

This sequence belongs to the protein kinase superfamily. CAMK Ser/Thr protein kinase family. SNF1 subfamily. Mn(2+) is required as a cofactor.

The enzyme catalyses L-seryl-[protein] + ATP = O-phospho-L-seryl-[protein] + ADP + H(+). It catalyses the reaction L-threonyl-[protein] + ATP = O-phospho-L-threonyl-[protein] + ADP + H(+). CIPK serine-threonine protein kinases interact with CBL proteins. Binding of a CBL protein to the regulatory NAF domain of CIPK protein lead to the activation of the kinase in a calcium-dependent manner. In Oryza sativa subsp. japonica (Rice), this protein is CBL-interacting protein kinase 8 (CIPK8).